Here is a 461-residue protein sequence, read N- to C-terminus: Bifunctional protein GlmU (461 aa).

Positions 1-236 are pyrophosphorylase; that stretch reads MNVLLQELFI…VFEIFGINNR (236 aa). Residues Lys-27, Gln-80, 85–86, 109–111, Gly-146, Glu-160, Asn-175, and Asn-234 each bind UDP-N-acetyl-alpha-D-glucosamine; these read GT and YGD. Asp-111 lines the Mg(2+) pocket. Asn-234 lines the Mg(2+) pocket. Residues 237–257 are linker; the sequence is FQLMKLEKIYQIEQAKKLLLN. Residues 258–461 are N-acetyltransferase; that stretch reads GVTLSDYNRF…SILRKENNSK (204 aa). Lys-358 provides a ligand contact to UDP-N-acetyl-alpha-D-glucosamine. The active-site Proton acceptor is His-370. Positions 373 and 384 each coordinate UDP-N-acetyl-alpha-D-glucosamine. The acetyl-CoA site is built by Ala-387, Ala-430, and Arg-447.

The protein in the N-terminal section; belongs to the N-acetylglucosamine-1-phosphate uridyltransferase family. It in the C-terminal section; belongs to the transferase hexapeptide repeat family. Homotrimer. It depends on Mg(2+) as a cofactor.

The protein localises to the cytoplasm. It catalyses the reaction alpha-D-glucosamine 1-phosphate + acetyl-CoA = N-acetyl-alpha-D-glucosamine 1-phosphate + CoA + H(+). The enzyme catalyses N-acetyl-alpha-D-glucosamine 1-phosphate + UTP + H(+) = UDP-N-acetyl-alpha-D-glucosamine + diphosphate. It participates in nucleotide-sugar biosynthesis; UDP-N-acetyl-alpha-D-glucosamine biosynthesis; N-acetyl-alpha-D-glucosamine 1-phosphate from alpha-D-glucosamine 6-phosphate (route II): step 2/2. It functions in the pathway nucleotide-sugar biosynthesis; UDP-N-acetyl-alpha-D-glucosamine biosynthesis; UDP-N-acetyl-alpha-D-glucosamine from N-acetyl-alpha-D-glucosamine 1-phosphate: step 1/1. Its pathway is bacterial outer membrane biogenesis; LPS lipid A biosynthesis. In terms of biological role, catalyzes the last two sequential reactions in the de novo biosynthetic pathway for UDP-N-acetylglucosamine (UDP-GlcNAc). The C-terminal domain catalyzes the transfer of acetyl group from acetyl coenzyme A to glucosamine-1-phosphate (GlcN-1-P) to produce N-acetylglucosamine-1-phosphate (GlcNAc-1-P), which is converted into UDP-GlcNAc by the transfer of uridine 5-monophosphate (from uridine 5-triphosphate), a reaction catalyzed by the N-terminal domain. The protein is Bifunctional protein GlmU of Wigglesworthia glossinidia brevipalpis.